The primary structure comprises 928 residues: Receptor-like kinase TMK4 (928 aa).

An N-terminal signal peptide occupies residues 1 to 24 (MEAPTPLLLLVLLTTITFFTTSVA). The Extracellular portion of the chain corresponds to 25–472 (DDQTAMLALA…GGSSGGGGSK (448 aa)). A disulfide bridge links cysteine 51 with cysteine 58. LRR repeat units lie at residues 61-84 (GRVTTISLADKSLTGFIAPEISTL), 85-107 (SELKSVSIQRNKLSGTIPSFAKL), 108-130 (SSLQEIYMDENNFVGVETGAFAG), 132-157 (TSLQILSLSDNNNITTWSFPSELVDS), 158-180 (TSLTTIYLDNTNIAGVLPDIFDS), 181-205 (LASLQNLRLSYNNITGVLPPSLGKS), 207-229 (IQNLWINNQDLGMSGTIEVLSSM), 230-251 (TSLSQAWLHKNHFFGPIPDLSK), 252-276 (SENLFDLQLRDNDLTGIVPPTLLTL), and 278-298 (SLKNISLDNNKFQGPLPLFSP). Asparagine 144 is a glycosylation site (N-linked (GlcNAc...) asparagine). The N-linked (GlcNAc...) asparagine glycan is linked to asparagine 193. N-linked (GlcNAc...) asparagine glycosylation is present at asparagine 281. 2 cysteine pairs are disulfide-bonded: cysteine 310/cysteine 318 and cysteine 348/cysteine 356. 3 LRR repeats span residues 360 to 383 (GKNVVTLNLGKHGFTGFISPAIAN), 384 to 407 (LTSLKSLYLNGNDLTGVIPKELTF), and 408 to 435 (MTSLQLIDVSNNNLRGEIPKFPATVKFS). A glycan (N-linked (GlcNAc...) asparagine) is linked at asparagine 383. The tract at residues 445 to 465 (TNGGDGSSPGTGGASGGPGGS) is disordered. A helical transmembrane segment spans residues 473–493 (VGVIVGVIVAVLVFLAILGFV). The Cytoplasmic portion of the chain corresponds to 494–928 (VYKFVMKRKY…PNTFDSADGR (435 aa)). Positions 578 to 858 (FSEDNILGRG…HAVNVLGPLV (281 aa)) constitute a Protein kinase domain. Residues 584–592 (LGRGGFGVV) and lysine 606 each bind ATP. Residue aspartate 707 is the Proton acceptor of the active site. 2 stretches are compositionally biased toward polar residues: residues 898-911 (FHGDFSYSQTQSSI) and 918-928 (FPNTFDSADGR). Residues 898-928 (FHGDFSYSQTQSSIPPKASGFPNTFDSADGR) form a disordered region.

It belongs to the protein kinase superfamily. Ser/Thr protein kinase family. Interacts with BAK1 (via kinase domain), SERK4 and SERK5. In terms of tissue distribution, expressed in roots, leaves, stems, siliques and flowers. Ubiquitous, with a high expression in mature pollen grains and in the pericycle and the xylem vasculature of the primary and lateral roots.

The protein resides in the membrane. It catalyses the reaction L-seryl-[protein] + ATP = O-phospho-L-seryl-[protein] + ADP + H(+). The catalysed reaction is L-threonyl-[protein] + ATP = O-phospho-L-threonyl-[protein] + ADP + H(+). In terms of biological role, involved in auxin signal transduction and cell expansion and proliferation regulation. May be involved in brassinosteroid-mediated plant growth and development via auxin regulation. May be involved in microspore and pollen development. The sequence is that of Receptor-like kinase TMK4 from Arabidopsis thaliana (Mouse-ear cress).